The chain runs to 431 residues: Protein EARLY STARVATION 1, chloroplastic (431 aa).

The transit peptide at 1 to 19 directs the protein to the chloroplast; it reads MAACSRGLVARPFDLTARG. 2 disordered regions span residues 65–126 and 403–431; these read GNKP…DTGI and GVYPTIDFSASSPAPPSDDPPGMPPSPLE. The span at 415-431 shows a compositional bias: pro residues; sequence PAPPSDDPPGMPPSPLE.

The protein belongs to the ESV1 family.

It localises to the plastid. The protein resides in the chloroplast stroma. Binds preferentially to highly ordered alpha-glucans, such as starch and crystalline maltodextrins. Involved in the organization of the starch granule matrix, thus influencing starch turnover by modulating the accessibility of starch polymers to modifying and degrading enzymes. Required for the control of starch degradation in leaves and starch distribution in nonphotosynthetic parts. Promotes gravitropic responses, negative in shoots but positive in roots, by facilitating starch granules (statoliths) formation in hypocotyls and roots columella. Facilitates tight packing of starch granules in grains. The sequence is that of Protein EARLY STARVATION 1, chloroplastic from Oryza sativa subsp. indica (Rice).